The primary structure comprises 149 residues: MTVVDPARFMYERNHFPSLTDKEFETLVLYCQMMNVQMVADYQNRKPDVIIKHLKSCRQKIGVESDFELYFIVINKFVNFERVFPELTSEQINILAAFSFYPKRSTIARRFDIYRCDIYDELIKIRNNLGIEDLESLRMLFFMKITVFL.

The protein resides in the cell membrane. This protein is essential for positively regulating the expression of transfer genes that are involved in the conjugal transfer of DNA between bacterial cells. In Escherichia coli, this protein is Protein TraJ (traJ).